Reading from the N-terminus, the 505-residue chain is ATP synthase subunit beta (505 aa).

Residues 1–25 (MAKAATPKETAAVKKPAAPKKAATA) are disordered. 183–190 (GGAGVGKT) is a binding site for ATP.

The protein belongs to the ATPase alpha/beta chains family. F-type ATPases have 2 components, CF(1) - the catalytic core - and CF(0) - the membrane proton channel. CF(1) has five subunits: alpha(3), beta(3), gamma(1), delta(1), epsilon(1). CF(0) has three main subunits: a(1), b(2) and c(9-12). The alpha and beta chains form an alternating ring which encloses part of the gamma chain. CF(1) is attached to CF(0) by a central stalk formed by the gamma and epsilon chains, while a peripheral stalk is formed by the delta and b chains.

It is found in the cell inner membrane. It catalyses the reaction ATP + H2O + 4 H(+)(in) = ADP + phosphate + 5 H(+)(out). Produces ATP from ADP in the presence of a proton gradient across the membrane. The catalytic sites are hosted primarily by the beta subunits. In Sinorhizobium fredii (strain NBRC 101917 / NGR234), this protein is ATP synthase subunit beta.